A 341-amino-acid polypeptide reads, in one-letter code: L-threonine 3-dehydrogenase (341 aa).

Zn(2+) is bound at residue Cys-38. Catalysis depends on charge relay system residues Thr-40 and His-43. His-63, Glu-64, Cys-93, Cys-96, Cys-99, and Cys-107 together coordinate Zn(2+). NAD(+) contacts are provided by residues Ile-175, Asp-195, Arg-200, 262 to 264, and 286 to 287; these read LGI and IY.

Belongs to the zinc-containing alcohol dehydrogenase family. Homotetramer. Zn(2+) serves as cofactor.

Its subcellular location is the cytoplasm. The enzyme catalyses L-threonine + NAD(+) = (2S)-2-amino-3-oxobutanoate + NADH + H(+). It functions in the pathway amino-acid degradation; L-threonine degradation via oxydo-reductase pathway; glycine from L-threonine: step 1/2. Functionally, catalyzes the NAD(+)-dependent oxidation of L-threonine to 2-amino-3-ketobutyrate. The sequence is that of L-threonine 3-dehydrogenase from Marinomonas sp. (strain MWYL1).